We begin with the raw amino-acid sequence, 367 residues long: Peptide chain release factor 2 (367 aa).

Gln-250 bears the N5-methylglutamine mark.

This sequence belongs to the prokaryotic/mitochondrial release factor family. In terms of processing, methylated by PrmC. Methylation increases the termination efficiency of RF2.

It localises to the cytoplasm. In terms of biological role, peptide chain release factor 2 directs the termination of translation in response to the peptide chain termination codons UGA and UAA. This is Peptide chain release factor 2 from Saccharopolyspora erythraea (strain ATCC 11635 / DSM 40517 / JCM 4748 / NBRC 13426 / NCIMB 8594 / NRRL 2338).